Here is a 256-residue protein sequence, read N- to C-terminus: 1-(5-phosphoribosyl)-5-[(5-phosphoribosylamino)methylideneamino] imidazole-4-carboxamide isomerase (256 aa).

Catalysis depends on D8, which acts as the Proton acceptor. D130 functions as the Proton donor in the catalytic mechanism.

This sequence belongs to the HisA/HisF family.

Its subcellular location is the cytoplasm. The catalysed reaction is 1-(5-phospho-beta-D-ribosyl)-5-[(5-phospho-beta-D-ribosylamino)methylideneamino]imidazole-4-carboxamide = 5-[(5-phospho-1-deoxy-D-ribulos-1-ylimino)methylamino]-1-(5-phospho-beta-D-ribosyl)imidazole-4-carboxamide. It functions in the pathway amino-acid biosynthesis; L-histidine biosynthesis; L-histidine from 5-phospho-alpha-D-ribose 1-diphosphate: step 4/9. In Chlorobium phaeobacteroides (strain DSM 266 / SMG 266 / 2430), this protein is 1-(5-phosphoribosyl)-5-[(5-phosphoribosylamino)methylideneamino] imidazole-4-carboxamide isomerase.